The chain runs to 59 residues: Cytochrome c oxidase subunit 7 (59 aa).

Residues methionine 1 to proline 24 are Mitochondrial matrix-facing. The chain crosses the membrane as a helical span at residues glycine 25–alanine 47. At serine 48–phenylalanine 59 the chain is on the mitochondrial intermembrane side.

It belongs to the cytochrome c oxidase subunit 7 family. In terms of assembly, component of the cytochrome c oxidase (complex IV, CIV), a multisubunit enzyme composed of a catalytic core of 3 subunits and several supernumerary subunits. The complex exists as a monomer or a dimer and forms supercomplexes (SCs) in the inner mitochondrial membrane with ubiquinol-cytochrome c oxidoreductase (cytochrome b-c1 complex, complex III, CIII).

The protein resides in the mitochondrion inner membrane. The protein operates within energy metabolism; oxidative phosphorylation. In terms of biological role, component of the cytochrome c oxidase, the last enzyme in the mitochondrial electron transport chain which drives oxidative phosphorylation. The respiratory chain contains 3 multisubunit complexes succinate dehydrogenase (complex II, CII), ubiquinol-cytochrome c oxidoreductase (cytochrome b-c1 complex, complex III, CIII) and cytochrome c oxidase (complex IV, CIV), that cooperate to transfer electrons derived from NADH and succinate to molecular oxygen, creating an electrochemical gradient over the inner membrane that drives transmembrane transport and the ATP synthase. Cytochrome c oxidase is the component of the respiratory chain that catalyzes the reduction of oxygen to water. Electrons originating from reduced cytochrome c in the intermembrane space (IMS) are transferred via the dinuclear copper A center (CU(A)) of subunit 2 and heme A of subunit 1 to the active site in subunit 1, a binuclear center (BNC) formed by heme A3 and copper B (CU(B)). The BNC reduces molecular oxygen to 2 water molecules using 4 electrons from cytochrome c in the IMS and 4 protons from the mitochondrial matrix. This Schizosaccharomyces pombe (strain 972 / ATCC 24843) (Fission yeast) protein is Cytochrome c oxidase subunit 7 (cox7).